Reading from the N-terminus, the 473-residue chain is Photosystem II CP43 reaction center protein (473 aa).

The propeptide occupies 1–14 (MKTLYSLRRFYPVE). T15 carries the N-acetylthreonine modification. T15 is modified (phosphothreonine). Helical transmembrane passes span 69 to 93 (LFEVAHFVPEKPMYEQGLILLPHLA), 134 to 155 (LLGPETLEESFPFFGYVWKDRN), 178 to 200 (KALYFGGVYDTWAPGGGDVRKIT), 255 to 275 (KPFAWARRALVWSGEAYLSYS), and 291 to 312 (WFNNTAYPSEFYGPTGPEASQA). E367 is a binding site for [CaMn4O5] cluster. A helical transmembrane segment spans residues 447–471 (RARAAAAGFEKGIDRDFEPVLSMTP).

The protein belongs to the PsbB/PsbC family. PsbC subfamily. In terms of assembly, PSII is composed of 1 copy each of membrane proteins PsbA, PsbB, PsbC, PsbD, PsbE, PsbF, PsbH, PsbI, PsbJ, PsbK, PsbL, PsbM, PsbT, PsbX, PsbY, PsbZ, Psb30/Ycf12, at least 3 peripheral proteins of the oxygen-evolving complex and a large number of cofactors. It forms dimeric complexes. The cofactor is Binds multiple chlorophylls and provides some of the ligands for the Ca-4Mn-5O cluster of the oxygen-evolving complex. It may also provide a ligand for a Cl- that is required for oxygen evolution. PSII binds additional chlorophylls, carotenoids and specific lipids..

It localises to the plastid. The protein resides in the chloroplast thylakoid membrane. Functionally, one of the components of the core complex of photosystem II (PSII). It binds chlorophyll and helps catalyze the primary light-induced photochemical processes of PSII. PSII is a light-driven water:plastoquinone oxidoreductase, using light energy to abstract electrons from H(2)O, generating O(2) and a proton gradient subsequently used for ATP formation. In Morus indica (Mulberry), this protein is Photosystem II CP43 reaction center protein.